A 551-amino-acid polypeptide reads, in one-letter code: Arginine--tRNA ligase (551 aa).

A 'HIGH' region motif is present at residues 125–135; the sequence is ANPTGPLHIGH.

Belongs to the class-I aminoacyl-tRNA synthetase family. Monomer.

It is found in the cytoplasm. The catalysed reaction is tRNA(Arg) + L-arginine + ATP = L-arginyl-tRNA(Arg) + AMP + diphosphate. In Oleidesulfovibrio alaskensis (strain ATCC BAA-1058 / DSM 17464 / G20) (Desulfovibrio alaskensis), this protein is Arginine--tRNA ligase.